A 446-amino-acid chain; its full sequence is Glutamyl-tRNA reductase (446 aa).

Substrate is bound by residues 49–52, S109, 114–116, and Q120; these read TCNR and ETQ. The active-site Nucleophile is the C50. 189 to 194 is an NADP(+) binding site; the sequence is GAGKMG.

Belongs to the glutamyl-tRNA reductase family. Homodimer.

It carries out the reaction (S)-4-amino-5-oxopentanoate + tRNA(Glu) + NADP(+) = L-glutamyl-tRNA(Glu) + NADPH + H(+). Its pathway is porphyrin-containing compound metabolism; protoporphyrin-IX biosynthesis; 5-aminolevulinate from L-glutamyl-tRNA(Glu): step 1/2. Functionally, catalyzes the NADPH-dependent reduction of glutamyl-tRNA(Glu) to glutamate 1-semialdehyde (GSA). This Priestia megaterium (Bacillus megaterium) protein is Glutamyl-tRNA reductase.